The primary structure comprises 1129 residues: MSSSRPASSSSSRNRQSSRARVLAQTTLDAELNAEYEESGDSFDYSKLVEAQRDGPPVQQGRSEKVIAYLQHIQKGKLIQTFGCMLALDEKSFNVIAFSENAPEMLTTVSHAVPSVDDPPRLGIGTNVRSLFSDQGATALHKALGFADVSLLNPILVQCKTSGKPFYAIVHRATGCLVVDFEPVKPTEFPATAAGALQSYKLAAKAISKIQSLPGGSMEVLCNTVVKEVFDLTGYDRVMAYKFHEDDHGEVFAEITKPGLEPYLGLHYPATDIPQAARFLFMKNKVRMICDCRARSIKVIEAEALPFDISLCGSALRAPHSCHLQYMENMNSIASLVMAVVVNENEEDDEAESEQPAQQQQKKKLWGLLVCHHESPRYVPFPLRYACEFLAQVFAVHVNREFELEKQLREKSILKMQTMLSDMLFREASPLTIVSGAPNIMDLVKCDGAALLYGGKVWRLRNAPTESQIHDIAFWLSDVHRDSTGLSTDSLHDAGYPGASALGDMICGMAVAKINSKDIIFWFRSHTAAEIRWGGAKHDSSDMDDSRRMHPRLSFKAFLEVVKMKSLPWTDYEMDAIHSLQLILRGTLNDASKPKREASLDNQIGDLKLDGLAELQAVTSEMVRLMETATVPILAVDGNGLVNGWNQKAAELTGLRVDDAIGRHILTLVEESSVPVVQRMLYLALQGKEEKEVRFEVKTHGPRRDDGPVILVVNACASRDLHDHVVGVCFVAQDMTVHKLVMDKFTRVEGDYKAIIHNPNPLIPPIFGADEFGWCSEWNAAMTKLTGWNRDEVLDKMLLGEVFDSSNASCPLKNKNAFVSLCVLINSALAGEETEKAPFGFFDRSGKYIECLLSANRKENEGGLITGVFCFIHVASHELQHALQVQQASEQTSLKRLKAFSYMRHAINNPLSGMLYSRKALKNTDLNEEQMKQIHVGDNCHHQINKILADLDQDSISEKSSCLDLEMAEFVFQDVVVAAVSQVLITCQGKGIRISCNLPERFMKQSVYGDGVRLQQILSDFLFISVKFSPVGGSVEISSKLTKNSIGENLHLIDLELRIKHQGLGVPAELMEQMFEEDNKEQSDEGLGLLVSRKLLRLMNGDVRHLREAGVSTFILTAELASAPTAIGQ.

Residues 1 to 21 show a composition bias toward low complexity; it reads MSSSRPASSSSSRNRQSSRAR. The tract at residues 1–24 is disordered; the sequence is MSSSRPASSSSSRNRQSSRARVLA. A GAF domain is found at 217–402; it reads SMEVLCNTVV…VFAVHVNREF (186 aa). Cys-322 serves as a coordination point for phytochromobilin. 2 consecutive PAS domains span residues 618-688 and 748-822; these read VTSE…LQGK and VEGD…VSLC. The Histidine kinase domain maps to 902 to 1122; sequence YMRHAINNPL…TFILTAELAS (221 aa).

The protein belongs to the phytochrome family. As to quaternary structure, homodimer. Contains one covalently linked phytochromobilin chromophore.

In terms of biological role, regulatory photoreceptor which exists in two forms that are reversibly interconvertible by light: the Pr form that absorbs maximally in the red region of the spectrum and the Pfr form that absorbs maximally in the far-red region. Photoconversion of Pr to Pfr induces an array of morphogenic responses, whereas reconversion of Pfr to Pr cancels the induction of those responses. Pfr controls the expression of a number of nuclear genes including those encoding the small subunit of ribulose-bisphosphate carboxylase, chlorophyll A/B binding protein, protochlorophyllide reductase, rRNA, etc. It also controls the expression of its own gene(s) in a negative feedback fashion. The polypeptide is Phytochrome A type 4 (PHYA4) (Avena sativa (Oat)).